We begin with the raw amino-acid sequence, 161 residues long: Bifurcating [FeFe] hydrogenase gamma subunit (161 aa).

Cys-78, Cys-83, Cys-119, and Cys-123 together coordinate [2Fe-2S] cluster.

The protein belongs to the complex I 24 kDa subunit family. Heterotrimer composed of HydA (alpha subunit), HydB (beta subunit) and HydC (gamma subunit). Near neutral and acidic pH conditions favor oligomerization of the heterotrimeric holoenzyme. The cofactor is [2Fe-2S] cluster.

It localises to the cytoplasm. It carries out the reaction 2 H2 + 2 oxidized [2Fe-2S]-[ferredoxin] + NAD(+) = 2 reduced [2Fe-2S]-[ferredoxin] + NADH + 3 H(+). Its function is as follows. Catalyzes the oxidation of the physiological electron carriers NADH and reduced ferredoxin, coupled to the production of H(2). Acts as a bifurcating [FeFe] hydrogenase, which uses the exergonic oxidation of reduced ferredoxin to drive the unfavorable oxidation of NADH to produce H(2). The gamma subunit might be the site where reduced ferredoxin is oxidized. This Thermotoga maritima (strain ATCC 43589 / DSM 3109 / JCM 10099 / NBRC 100826 / MSB8) protein is Bifurcating [FeFe] hydrogenase gamma subunit.